We begin with the raw amino-acid sequence, 688 residues long: Amino-acid acetyltransferase, mitochondrial (688 aa).

The transit peptide at 1–45 (MSSRALTWPRTAKSSLLKQQTSSFVGQPKLGTPNCRSFSSTADRP) directs the protein to the mitochondrion. 2 disordered regions span residues 1 to 59 (MSSR…SKSY) and 96 to 119 (LKAQ…TVTQ). 3 stretches are compositionally biased toward polar residues: residues 12–25 (AKSS…SSFV), 34–57 (NCRS…SSSK), and 106–119 (TEPT…TVTQ). Residues 509–678 (NRPRLSLDDP…YEQVCRSIQP (170 aa)) form the N-acetyltransferase domain.

It belongs to the acetyltransferase family.

It is found in the mitochondrion. It catalyses the reaction L-glutamate + acetyl-CoA = N-acetyl-L-glutamate + CoA + H(+). Its pathway is amino-acid biosynthesis; L-arginine biosynthesis; N(2)-acetyl-L-ornithine from L-glutamate: step 1/4. N-acetylglutamate synthase involved in arginine biosynthesis. The polypeptide is Amino-acid acetyltransferase, mitochondrial (arg2) (Aspergillus flavus (strain ATCC 200026 / FGSC A1120 / IAM 13836 / NRRL 3357 / JCM 12722 / SRRC 167)).